Reading from the N-terminus, the 56-residue chain is Large ribosomal subunit protein bL33 (56 aa).

A compositionally biased stretch (basic and acidic residues) spans 1–12 (MATKGGRDKIKL). A disordered region spans residues 1 to 24 (MATKGGRDKIKLESTAGTGHFYTT). A compositionally biased stretch (polar residues) spans 15–24 (TAGTGHFYTT).

This sequence belongs to the bacterial ribosomal protein bL33 family.

The polypeptide is Large ribosomal subunit protein bL33 (Paracidovorax citrulli (strain AAC00-1) (Acidovorax citrulli)).